A 776-amino-acid chain; its full sequence is Mitochondrial intermediate peptidase (776 aa).

A mitochondrion-targeting transit peptide spans 1–28 (MFVRFYKRLDRQYIQSQRRWILSSNKCL). The interval 48–71 (DHWEESQAQNTSSEQDNKGKNSSY) is disordered. Residues 53-71 (SQAQNTSSEQDNKGKNSSY) are compositionally biased toward polar residues. His567 contacts Zn(2+). The active site involves Glu568. Positions 571 and 574 each coordinate Zn(2+).

This sequence belongs to the peptidase M3 family. Zn(2+) is required as a cofactor.

It localises to the mitochondrion matrix. The enzyme catalyses Release of an N-terminal octapeptide as second stage of processing of some proteins imported into the mitochondrion.. Its function is as follows. Cleaves proteins, imported into the mitochondrion, to their mature size. While most mitochondrial precursor proteins are processed to the mature form in one step by mitochondrial processing peptidase (MPP), the sequential cleavage by MIP of an octapeptide after initial processing by MPP is a required step for a subgroup of nuclear-encoded precursor proteins destined for the matrix or the inner membrane. In Eremothecium gossypii (strain ATCC 10895 / CBS 109.51 / FGSC 9923 / NRRL Y-1056) (Yeast), this protein is Mitochondrial intermediate peptidase (OCT1).